A 111-amino-acid chain; its full sequence is DNA-binding protein AF_2068 (111 aa).

Belongs to the PDCD5 family.

This Archaeoglobus fulgidus (strain ATCC 49558 / DSM 4304 / JCM 9628 / NBRC 100126 / VC-16) protein is DNA-binding protein AF_2068.